A 682-amino-acid chain; its full sequence is Pneumocandin biosynthesis cluster protein B (682 aa).

A compositionally biased stretch (low complexity) spans 63 to 73 (SSLSSTEVTSS). 3 disordered regions span residues 63–86 (SSLS…DAPE), 107–129 (QNTP…DTNQ), and 251–358 (SEST…SPAN). 2 stretches are compositionally biased toward polar residues: residues 257-279 (NTGS…SHSS) and 310-320 (PRQTTEATPCD). The segment covering 335 to 349 (PERRSMKMVRKEARD) has biased composition (basic and acidic residues).

Its function is as follows. Part of the gene cluster that mediates the biosynthesis of pneumocandins, lipohexapeptides of the echinocandin family that prevent fungal cell wall formation by non-competitive inhibition of beta-1,3-glucan synthase. The 10,12-dimethylmyristoyl side chain is synthesized by the reducing polyketide synthase gloL/GLPKS4. The thioesterase gloN/GLHYD exclusively interacts with gloL/GLPKS4 to maintain turnover of the polyketide side chain. The 10R,12S-dimethylmyristic acid is then transferred to the first thiolation domain of the nonribosomal peptide synthetase gloA/GLNRPS4 by the acyl-AMP ligase gloD/GLligase, followed by its acylation to L-ornithine to trigger elongation of the cyclic hexapeptide. L-ornithine, 4R-hydroxyl-L-proline (generated from L-proline by the dioxygenase gloF/GLOXY2), 3S-hydroxyl-L-homotyrosine (generated by gloG/GLHtyB, gloH/GLHtyA, gloI/GLHtyC, gloJ/GLHtyD and hydroxylated at C-3 by the dioxygenase gloM/GLOXY1), 3R-hydroxyl-L-glutamine (generated from L-glutamine probably by the dioxygenase gloE/GLOXY3) and 3S-hydroxyl-L-proline (generated from L-proline by the dioxygenase gloF/GLOXY2 to yield pneumocandin B0), or 3S-hydroxyl-4S-methyl-L-proline (generated from L-leucine by the dioxygenase gloC/GLOXY4 to yield pneumocandin A0) are sequentially added to the growing chain. The last C domain of gloA/GLNRPS4 is proposed to be responsible for cyclization by condensation to form the peptide bond between L-ornithine and 3S-hydroxyl-4S-methyl-L-proline (for pneumocandin A0) or 3S-hydroxyl-L-proline (for pneumocandin B0). Finally, the subsequent C-4 hydroxylation of 3S-hydroxyl-L-homotyrosine and L-ornithine dihydroxylation at C-4 and C-5 are performed by the cytochrome P450 monooxygenases gloP/GLP450-1 and gloO/GLP450-2, respectively. This Glarea lozoyensis (strain ATCC 20868 / MF5171) protein is Pneumocandin biosynthesis cluster protein B.